The following is a 235-amino-acid chain: Ubiquinone/menaquinone biosynthesis C-methyltransferase UbiE (235 aa).

Residues Thr-60 and Asp-81 each coordinate S-adenosyl-L-methionine.

This sequence belongs to the class I-like SAM-binding methyltransferase superfamily. MenG/UbiE family.

The enzyme catalyses a 2-demethylmenaquinol + S-adenosyl-L-methionine = a menaquinol + S-adenosyl-L-homocysteine + H(+). It carries out the reaction a 2-methoxy-6-(all-trans-polyprenyl)benzene-1,4-diol + S-adenosyl-L-methionine = a 5-methoxy-2-methyl-3-(all-trans-polyprenyl)benzene-1,4-diol + S-adenosyl-L-homocysteine + H(+). The protein operates within quinol/quinone metabolism; menaquinone biosynthesis; menaquinol from 1,4-dihydroxy-2-naphthoate: step 2/2. It participates in cofactor biosynthesis; ubiquinone biosynthesis. Methyltransferase required for the conversion of demethylmenaquinol (DMKH2) to menaquinol (MKH2) and the conversion of 2-polyprenyl-6-methoxy-1,4-benzoquinol (DDMQH2) to 2-polyprenyl-3-methyl-6-methoxy-1,4-benzoquinol (DMQH2). In Geotalea daltonii (strain DSM 22248 / JCM 15807 / FRC-32) (Geobacter daltonii), this protein is Ubiquinone/menaquinone biosynthesis C-methyltransferase UbiE.